The sequence spans 402 residues: Sulfate adenylyltransferase (402 aa).

Belongs to the sulfate adenylyltransferase family.

The catalysed reaction is sulfate + ATP + H(+) = adenosine 5'-phosphosulfate + diphosphate. The protein operates within sulfur metabolism; hydrogen sulfide biosynthesis; sulfite from sulfate: step 1/3. This Thiobacillus denitrificans (strain ATCC 25259 / T1) protein is Sulfate adenylyltransferase.